Here is a 30-residue protein sequence, read N- to C-terminus: Photosystem I reaction center subunit XII (30 aa).

Residues 6-26 (VFTILAIALVPAVMAALLGSA) traverse the membrane as a helical segment.

This sequence belongs to the PsaM family.

Its subcellular location is the cellular thylakoid membrane. This Synechococcus sp. (strain JA-3-3Ab) (Cyanobacteria bacterium Yellowstone A-Prime) protein is Photosystem I reaction center subunit XII.